We begin with the raw amino-acid sequence, 555 residues long: Oxygen-dependent choline dehydrogenase (555 aa).

An FAD-binding site is contributed by aspartate 4–glutamate 33. Residue histidine 473 is the Proton acceptor of the active site.

This sequence belongs to the GMC oxidoreductase family. Requires FAD as cofactor.

It carries out the reaction choline + A = betaine aldehyde + AH2. It catalyses the reaction betaine aldehyde + NAD(+) + H2O = glycine betaine + NADH + 2 H(+). It participates in amine and polyamine biosynthesis; betaine biosynthesis via choline pathway; betaine aldehyde from choline (cytochrome c reductase route): step 1/1. Involved in the biosynthesis of the osmoprotectant glycine betaine. Catalyzes the oxidation of choline to betaine aldehyde and betaine aldehyde to glycine betaine at the same rate. This chain is Oxygen-dependent choline dehydrogenase, found in Proteus mirabilis (strain HI4320).